The primary structure comprises 283 residues: Succinate dehydrogenase [ubiquinone] iron-sulfur subunit, mitochondrial (283 aa).

Residues 66 to 145 (KKPTLQTYSI…PVKIYPLPHM (80 aa)) form the 2Fe-2S ferredoxin-type domain. Positions 105, 110, 113, and 125 each coordinate [2Fe-2S] cluster. A 4Fe-4S ferredoxin-type domain is found at 186–216 (DRKKLDGMYECILCACCSTSCPSYWWNQDEY). [4Fe-4S] cluster-binding residues include Cys196, Cys199, and Cys202. Cys206 serves as a coordination point for [3Fe-4S] cluster. Trp211 is an a ubiquinone binding site. [3Fe-4S] cluster is bound by residues Cys253 and Cys259. Cys263 provides a ligand contact to [4Fe-4S] cluster.

The protein belongs to the succinate dehydrogenase/fumarate reductase iron-sulfur protein family. In terms of assembly, component of complex II composed of four subunits: a flavoprotein (FP), an iron-sulfur protein (IP), and a cytochrome b composed of a large and a small subunit. [2Fe-2S] cluster is required as a cofactor. The cofactor is [3Fe-4S] cluster. It depends on [4Fe-4S] cluster as a cofactor.

The protein resides in the mitochondrion inner membrane. The enzyme catalyses a quinone + succinate = fumarate + a quinol. It participates in carbohydrate metabolism; tricarboxylic acid cycle; fumarate from succinate (eukaryal route): step 1/1. Its function is as follows. Iron-sulfur protein (IP) subunit of succinate dehydrogenase (SDH) that is involved in complex II of the mitochondrial electron transport chain and is responsible for transferring electrons from succinate to ubiquinone (coenzyme Q). This chain is Succinate dehydrogenase [ubiquinone] iron-sulfur subunit, mitochondrial (SDH2), found in Uromyces fabae (Rust fungus).